A 698-amino-acid polypeptide reads, in one-letter code: tRNA (guanine(37)-N(1))-methyltransferase (698 aa).

A disordered region spans residues 207 to 242 (SPPSVSLTENQDGDPQAQDSLRAVAAPPSPSSRKRG). S-adenosyl-L-methionine-binding positions include His-427, 465–466 (DL), 494–495 (DG), and Asn-536.

This sequence belongs to the class I-like SAM-binding methyltransferase superfamily. TRM5/TYW2 family. As to quaternary structure, monomer.

The protein resides in the mitochondrion matrix. The protein localises to the nucleus. It localises to the cytoplasm. The enzyme catalyses guanosine(37) in tRNA + S-adenosyl-L-methionine = N(1)-methylguanosine(37) in tRNA + S-adenosyl-L-homocysteine + H(+). Specifically methylates the N1 position of guanosine-37 in various cytoplasmic and mitochondrial tRNAs. Methylation is not dependent on the nature of the nucleoside 5' of the target nucleoside. This is the first step in the biosynthesis of wybutosine (yW), a modified base adjacent to the anticodon of tRNAs and required for accurate decoding. This Leishmania braziliensis protein is tRNA (guanine(37)-N(1))-methyltransferase.